Here is a 349-residue protein sequence, read N- to C-terminus: Peroxidase C3 (349 aa).

A signal peptide spans 1–29; the sequence is MGFSPLISCSAMGALILSCLLLQASNSNA. Cystine bridges form between Cys-40–Cys-120, Cys-73–Cys-78, Cys-126–Cys-329, and Cys-206–Cys-238. The active-site Proton acceptor is His-71. Ca(2+)-binding residues include Asp-72, Val-75, Gly-77, Asp-79, and Ser-81. N-linked (GlcNAc...) asparagine glycosylation is present at Asn-86. Pro-168 provides a ligand contact to substrate. Position 199 (His-199) interacts with heme b. Thr-200 is a binding site for Ca(2+). Residues Asn-217 and Asn-243 are each glycosylated (N-linked (GlcNAc...) asparagine). Ca(2+)-binding residues include Asp-251, Thr-254, and Asp-259.

This sequence belongs to the peroxidase family. Classical plant (class III) peroxidase subfamily. Ca(2+) is required as a cofactor. Heme b serves as cofactor.

Its subcellular location is the secreted. The protein localises to the vacuole. The catalysed reaction is 2 a phenolic donor + H2O2 = 2 a phenolic radical donor + 2 H2O. Its function is as follows. Removal of H(2)O(2), oxidation of toxic reductants, biosynthesis and degradation of lignin, suberization, auxin catabolism, response to environmental stresses such as wounding, pathogen attack and oxidative stress. These functions might be dependent on each isozyme/isoform in each plant tissue. This is Peroxidase C3 (PRXC3) from Armoracia rusticana (Horseradish).